The following is an 84-amino-acid chain: Toxin Tst1 (84 aa).

Residues 1-19 (MKGMILFISCLLLIDIVVG) form the signal peptide. In terms of domain architecture, LCN-type CS-alpha/beta spans 21–82 (KEGYLMDHEG…VWDRATNKCG (62 aa)). 4 cysteine pairs are disulfide-bonded: Cys-31-Cys-81, Cys-35-Cys-57, Cys-43-Cys-62, and Cys-47-Cys-64. Cys-81 carries the cysteine amide modification.

Expressed by the venom gland.

It is found in the secreted. Beta toxins bind voltage-independently at site-4 of sodium channels (Nav) and shift the voltage of activation toward more negative potentials thereby affecting sodium channel activation and promoting spontaneous and repetitive firing. This toxin is active only on mammals. Is toxic to mice. This Tityus stigmurus (Brazilian scorpion) protein is Toxin Tst1.